The chain runs to 699 residues: Elongation factor G (699 aa).

In terms of domain architecture, tr-type G spans 8–288; that stretch reads EDYRNFGIMA…AVVDYLPSPL (281 aa). Residues 17–24, 86–90, and 140–143 contribute to the GTP site; these read AHIDAGKT, DTPGH, and NKMD.

Belongs to the TRAFAC class translation factor GTPase superfamily. Classic translation factor GTPase family. EF-G/EF-2 subfamily.

Its subcellular location is the cytoplasm. In terms of biological role, catalyzes the GTP-dependent ribosomal translocation step during translation elongation. During this step, the ribosome changes from the pre-translocational (PRE) to the post-translocational (POST) state as the newly formed A-site-bound peptidyl-tRNA and P-site-bound deacylated tRNA move to the P and E sites, respectively. Catalyzes the coordinated movement of the two tRNA molecules, the mRNA and conformational changes in the ribosome. This is Elongation factor G from Rhizobium etli (strain CIAT 652).